The sequence spans 306 residues: Grixazone synthase (306 aa).

Residues His39, His58, His67, His222, His226, and His248 each coordinate Cu(2+).

The protein belongs to the tyrosinase family. Requires Cu(2+) as cofactor.

The catalysed reaction is 2 3-amino-4-hydroxybenzoate + N-acetyl-L-cysteine + 2 O2 + H(+) = grixazone B + CO2 + 4 H2O. It carries out the reaction 2 3-amino-4-hydroxybenzaldehyde + N-acetyl-L-cysteine + 2 O2 = grixazone A + formate + 3 H2O + H(+). It catalyses the reaction 4 2-aminophenol + 3 O2 = 2 2-aminophenoxazin-3-one + 6 H2O. Inhibited by 3-amino-4-hydroxybenzensulfonic acid, 4-hydroxy-3-nitrobenzaldehyde, L-tyrosine, p-hydroxybenzaldehyde. Activated by the copper chaperone GriE. Involved in the biosynthesis of the parasiticide antibiotic grixazone. Catalyzes the oxidation of 3-amino-4-hydroxybenzoate (3,4-AHBOA) to yield the corresponding quinone imine which is then non-enzymatically conjugated with the thiol group of N-acetylcysteine. The resultant compound is oxidized to its quinone imine enzymatically and is then dimerized non-enzymatically with another quinone imine oxidized by GriF to yield grixazone B. 3-amino-4-hydroxybenzaldehyde (3,4-AHBAL) can also be used as substrate to yield grixazone A. In the grixazone biosynthetic pathway, it can also function as an o-aminophenol oxidase that catalyzes the formation of the phenoxazinone chromophore from alpha-aminophenol. It can also use 2-amino-4-methylphenol, and to a lesser extent, 3,4-dihydroxybenzaldehyde, catechol and 3,4-dihydroxy-L-phenylalanine (L-DOPA) as substrates. In contrast to tyrosinases, it does not display monophenolase activity. The chain is Grixazone synthase from Streptomyces griseus subsp. griseus (strain JCM 4626 / CBS 651.72 / NBRC 13350 / KCC S-0626 / ISP 5235).